The following is a 122-amino-acid chain: Large ribosomal subunit protein uL14 (122 aa).

This sequence belongs to the universal ribosomal protein uL14 family. Part of the 50S ribosomal subunit. Forms a cluster with proteins L3 and L19. In the 70S ribosome, L14 and L19 interact and together make contacts with the 16S rRNA in bridges B5 and B8.

Binds to 23S rRNA. Forms part of two intersubunit bridges in the 70S ribosome. This is Large ribosomal subunit protein uL14 from Limosilactobacillus reuteri (strain DSM 20016) (Lactobacillus reuteri).